Reading from the N-terminus, the 274-residue chain is Ribosomal RNA small subunit methyltransferase A (274 aa).

Positions 15, 17, 42, 64, 89, and 108 each coordinate S-adenosyl-L-methionine.

Belongs to the class I-like SAM-binding methyltransferase superfamily. rRNA adenine N(6)-methyltransferase family. RsmA subfamily.

The protein localises to the cytoplasm. The catalysed reaction is adenosine(1518)/adenosine(1519) in 16S rRNA + 4 S-adenosyl-L-methionine = N(6)-dimethyladenosine(1518)/N(6)-dimethyladenosine(1519) in 16S rRNA + 4 S-adenosyl-L-homocysteine + 4 H(+). Its function is as follows. Specifically dimethylates two adjacent adenosines (A1518 and A1519) in the loop of a conserved hairpin near the 3'-end of 16S rRNA in the 30S particle. May play a critical role in biogenesis of 30S subunits. The polypeptide is Ribosomal RNA small subunit methyltransferase A (Prochlorococcus marinus (strain MIT 9215)).